Consider the following 309-residue polypeptide: Peptide methionine sulfoxide reductase MsrA/MsrB (309 aa).

A peptide methionine sulfoxide reductase A region spans residues Met-1–Asn-153. Cys-8 is an active-site residue. Residues Ala-170–Lys-293 form the MsrB domain. The active-site Nucleophile is the Cys-282.

In the N-terminal section; belongs to the MsrA Met sulfoxide reductase family. This sequence in the C-terminal section; belongs to the MsrB Met sulfoxide reductase family.

The enzyme catalyses L-methionyl-[protein] + [thioredoxin]-disulfide + H2O = L-methionyl-(S)-S-oxide-[protein] + [thioredoxin]-dithiol. It catalyses the reaction [thioredoxin]-disulfide + L-methionine + H2O = L-methionine (S)-S-oxide + [thioredoxin]-dithiol. The catalysed reaction is L-methionyl-[protein] + [thioredoxin]-disulfide + H2O = L-methionyl-(R)-S-oxide-[protein] + [thioredoxin]-dithiol. Its function is as follows. Has an important function as a repair enzyme for proteins that have been inactivated by oxidation. Catalyzes the reversible oxidation-reduction of methionine sulfoxide in proteins to methionine. The sequence is that of Peptide methionine sulfoxide reductase MsrA/MsrB (msrAB) from Streptococcus pyogenes serotype M3 (strain ATCC BAA-595 / MGAS315).